The sequence spans 145 residues: Monooxygenase AacuP (145 aa).

This sequence belongs to the avfA family.

The protein operates within secondary metabolite biosynthesis. In terms of biological role, monooxygenase; part of the gene cluster that mediates the biosynthesis of the tetrahydroxanthone dimer secalonic acid D. The pathway begins with the synthesis of atrochrysone thioester by the polyketide synthase AacuL. The atrochrysone carboxyl ACP thioesterase AacuM then breaks the thioester bond and releases the atrochrysone carboxylic acid from AacuL. Atrochrysone carboxylic acid is decarboxylated by the decarboxylase AacuI, and oxidized by the anthrone oxygenase AacuG to yield emodin. Emodin is then reduced to emodin hydroquinone by a yet unidentified oxidoreductase. A-ring reduction by the short chain dehydrogenase AacuN, dehydration by the scytalone dehydratase-like protein AacuK and probable spontaneous re-oxidation, results in overall deoxygenation to chrysophanol. Baeyer-Villiger oxidation by the Baeyer-Villiger monooxygenase (BVMO) AacuH then yields monodictyphenone. Monodictyphenone is transformed into compounds with the tetrahydroxanthone skeleton via methylesterification by the methyltransferase AacuQ, followed by the action of the flavin-dependent monooxygenase AacuC, the isomerase AacuP, and the short chain dehydrogenase/reductase AacuF or AacuD. AacuF and AacuD should accept the same compound as a substrate but perform the ketoreduction with a different stereoselectivity, thus yielding blennolides B and A, respectively. In the final step of the biosynthesis, the cytochrome P450 monooxygenase AacuE accepts blennolide B and/or blennolide A to conduct the dimerization reaction to furnish the tetrahydroxanthone dimers, secalonic acids D, B, and F. This Aspergillus aculeatus (strain ATCC 16872 / CBS 172.66 / WB 5094) protein is Monooxygenase AacuP.